Reading from the N-terminus, the 171-residue chain is S-ribosylhomocysteine lyase (171 aa).

Fe cation contacts are provided by His54, His58, and Cys128.

The protein belongs to the LuxS family. In terms of assembly, homodimer. The cofactor is Fe cation.

The catalysed reaction is S-(5-deoxy-D-ribos-5-yl)-L-homocysteine = (S)-4,5-dihydroxypentane-2,3-dione + L-homocysteine. Involved in the synthesis of autoinducer 2 (AI-2) which is secreted by bacteria and is used to communicate both the cell density and the metabolic potential of the environment. The regulation of gene expression in response to changes in cell density is called quorum sensing. Catalyzes the transformation of S-ribosylhomocysteine (RHC) to homocysteine (HC) and 4,5-dihydroxy-2,3-pentadione (DPD). The chain is S-ribosylhomocysteine lyase from Serratia proteamaculans (strain 568).